The following is a 116-amino-acid chain: Aspartate 1-decarboxylase (116 aa).

The Schiff-base intermediate with substrate; via pyruvic acid role is filled by Ser25. The residue at position 25 (Ser25) is a Pyruvic acid (Ser). Residue Thr57 participates in substrate binding. Tyr58 (proton donor) is an active-site residue. 73–75 serves as a coordination point for substrate; that stretch reads GAA.

It belongs to the PanD family. In terms of assembly, heterooctamer of four alpha and four beta subunits. Requires pyruvate as cofactor. Is synthesized initially as an inactive proenzyme, which is activated by self-cleavage at a specific serine bond to produce a beta-subunit with a hydroxyl group at its C-terminus and an alpha-subunit with a pyruvoyl group at its N-terminus.

Its subcellular location is the cytoplasm. It carries out the reaction L-aspartate + H(+) = beta-alanine + CO2. Its pathway is cofactor biosynthesis; (R)-pantothenate biosynthesis; beta-alanine from L-aspartate: step 1/1. Its function is as follows. Catalyzes the pyruvoyl-dependent decarboxylation of aspartate to produce beta-alanine. The sequence is that of Aspartate 1-decarboxylase from Parabacteroides distasonis (strain ATCC 8503 / DSM 20701 / CIP 104284 / JCM 5825 / NCTC 11152).